A 98-amino-acid polypeptide reads, in one-letter code: Conotoxin Di19A (98 aa).

Positions 1–19 (MSTLGILLPIALLLPLANP) are cleaved as a signal peptide. Positions 20–49 (AENGDGQAMPRTRNLRSLSFGRTLRRLEKR) are excised as a propeptide. Pro-53 is modified (4-hydroxyproline). A 4-carboxyglutamate modification is found at Glu-63. Pro-68, Pro-93, and Pro-97 each carry 4-hydroxyproline.

Contains 5 disulfide bonds. As to expression, expressed by the venom duct.

It localises to the secreted. In terms of biological role, injection of the synthetic peptide causes a hyperexcitable phenotype in mice greater than three weeks of age at lower doses, and lethargy at higher doses. This Conus distans (Distant cone) protein is Conotoxin Di19A.